The chain runs to 346 residues: N-acetyl-gamma-glutamyl-phosphate reductase (346 aa).

Residue Cys149 is part of the active site.

This sequence belongs to the NAGSA dehydrogenase family. Type 1 subfamily.

The protein localises to the cytoplasm. The enzyme catalyses N-acetyl-L-glutamate 5-semialdehyde + phosphate + NADP(+) = N-acetyl-L-glutamyl 5-phosphate + NADPH + H(+). It functions in the pathway amino-acid biosynthesis; L-arginine biosynthesis; N(2)-acetyl-L-ornithine from L-glutamate: step 3/4. Catalyzes the NADPH-dependent reduction of N-acetyl-5-glutamyl phosphate to yield N-acetyl-L-glutamate 5-semialdehyde. The sequence is that of N-acetyl-gamma-glutamyl-phosphate reductase from Geobacter sulfurreducens (strain ATCC 51573 / DSM 12127 / PCA).